Reading from the N-terminus, the 235-residue chain is Ubiquinone biosynthesis O-methyltransferase (235 aa).

Arginine 39, glycine 59, aspartate 80, and methionine 124 together coordinate S-adenosyl-L-methionine.

It belongs to the methyltransferase superfamily. UbiG/COQ3 family.

It carries out the reaction a 3-demethylubiquinol + S-adenosyl-L-methionine = a ubiquinol + S-adenosyl-L-homocysteine + H(+). The catalysed reaction is a 3-(all-trans-polyprenyl)benzene-1,2-diol + S-adenosyl-L-methionine = a 2-methoxy-6-(all-trans-polyprenyl)phenol + S-adenosyl-L-homocysteine + H(+). Its pathway is cofactor biosynthesis; ubiquinone biosynthesis. Its function is as follows. O-methyltransferase that catalyzes the 2 O-methylation steps in the ubiquinone biosynthetic pathway. The polypeptide is Ubiquinone biosynthesis O-methyltransferase (Photobacterium profundum (strain SS9)).